Reading from the N-terminus, the 905-residue chain is Nitrate reductase [NADPH] (905 aa).

Residues 1-42 (METSTTTTLLQQERIPENSEPISTHIHTHSLPPTPPGTAKPS) form a disordered region. Cys-179 contacts Mo-molybdopterin. The Cytochrome b5 heme-binding domain maps to 546 to 621 (NRKITIEELK…LPTYHIGTLD (76 aa)). Positions 581 and 604 each coordinate heme. One can recognise an FAD-binding FR-type domain in the interval 648-759 (KTWSKAILDK…KGPTGKFVYH (112 aa)). Residues 702–705 (RSYT), 719–723 (LIKIY), 733–735 (VMT), Ser-783, and Thr-786 contribute to the FAD site. Position 875–884 (875–884 (LLLVCGPPPM)) interacts with NADP(+).

This sequence belongs to the nitrate reductase family. In terms of assembly, homodimer. Requires FAD as cofactor. It depends on heme as a cofactor. The cofactor is Mo-molybdopterin.

It catalyses the reaction nitrite + NADP(+) + H2O = nitrate + NADPH + H(+). Its function is as follows. Nitrate reductase is a key enzyme involved in the first step of nitrate assimilation in plants, fungi and bacteria. This is Nitrate reductase [NADPH] (NIA) from Fusarium oxysporum (Fusarium vascular wilt).